The following is a 306-amino-acid chain: Deoxyribokinase (306 aa).

Substrate is bound by residues 10-12, 38-42, and glutamate 139; these read MVD and GKGAN. ATP is bound by residues asparagine 184 and 220-225; that span reads TMGEKG. Residues aspartate 246 and serine 248 each contribute to the K(+) site. 251–252 serves as a coordination point for ATP; the sequence is GD. Residue aspartate 252 coordinates substrate. Aspartate 252 functions as the Proton acceptor in the catalytic mechanism. Residues serine 282, glycine 285, glycine 287, and serine 291 each coordinate K(+).

This sequence belongs to the carbohydrate kinase PfkB family. Deoxyribokinase subfamily. In terms of assembly, homodimer. Mg(2+) serves as cofactor.

It is found in the cytoplasm. It catalyses the reaction 2-deoxy-D-ribose + ATP = 2-deoxy-D-ribose 5-phosphate + ADP + H(+). In terms of biological role, catalyzes the ATP-dependent phosphorylation of 2-deoxy-D-ribose to 2-deoxy-D-ribose 5-phosphate (dRib-5P), allowing the use of deoxyribose as the sole carbon source. Can also use D-ribose, with much lower efficiency. This chain is Deoxyribokinase, found in Salmonella typhi.